Consider the following 217-residue polypeptide: Large ribosomal subunit protein uL1 (217 aa).

This sequence belongs to the universal ribosomal protein uL1 family. As to quaternary structure, part of the 50S ribosomal subunit.

Its function is as follows. Binds directly to 23S rRNA. Probably involved in E site tRNA release. Protein L1 is also a translational repressor protein, it controls the translation of its operon by binding to its mRNA. This is Large ribosomal subunit protein uL1 from Thermoplasma volcanium (strain ATCC 51530 / DSM 4299 / JCM 9571 / NBRC 15438 / GSS1).